The primary structure comprises 131 residues: D-ribose pyranase (131 aa).

His20 acts as the Proton donor in catalysis. Residues Asp28, His98, and 120–122 (YSN) contribute to the substrate site.

It belongs to the RbsD / FucU family. RbsD subfamily. Homodecamer.

It is found in the cytoplasm. It catalyses the reaction beta-D-ribopyranose = beta-D-ribofuranose. The protein operates within carbohydrate metabolism; D-ribose degradation; D-ribose 5-phosphate from beta-D-ribopyranose: step 1/2. In terms of biological role, catalyzes the interconversion of beta-pyran and beta-furan forms of D-ribose. This is D-ribose pyranase from Lactobacillus gasseri (strain ATCC 33323 / DSM 20243 / BCRC 14619 / CIP 102991 / JCM 1131 / KCTC 3163 / NCIMB 11718 / NCTC 13722 / AM63).